A 58-amino-acid polypeptide reads, in one-letter code: uncharacterized protein (58 aa).

This is an uncharacterized protein from Bacillus anthracis.